We begin with the raw amino-acid sequence, 917 residues long: Smoothelin (917 aa).

Ala2 bears the N-acetylalanine mark. The stretch at 24–89 (LAERRRIRSA…ARLAGQLESM (66 aa)) forms a coiled coil. A disordered region spans residues 157 to 456 (EVPEREEQEQ…AVGTAEPGGS (300 aa)). Residues 177 to 188 (PEGTSQDVTTVT) show a composition bias toward polar residues. 2 stretches are compositionally biased toward low complexity: residues 193–210 (APPG…SSPT) and 220–232 (PAEA…EVPG). The segment covering 233-243 (SPEPPPSPPKT) has biased composition (pro residues). Residues 244–258 (TSPEPQESPTLPSTE) show a composition bias toward low complexity. A compositionally biased stretch (polar residues) spans 298-326 (RSLSVLSPRQPAQNRESTPLASGPSSFQR). 3 positions are modified to phosphoserine: Ser299, Ser301, and Ser304. Basic and acidic residues predominate over residues 329–338 (SVRDRVHKFT). The residue at position 341 (Ser341) is a Phosphoserine. Thr351 is subject to Phosphothreonine. Ser357 carries the phosphoserine modification. 2 positions are modified to phosphothreonine: Thr360 and Thr373. Residues 363–392 (RLLGPSLTSTTPASSSSGSSSRGPSDTSSR) are compositionally biased toward low complexity. Residues Ser503, Ser514, Ser523, and Ser576 each carry the phosphoserine modification. Disordered regions lie at residues 560–580 (ANGA…PLSA) and 617–767 (QRKR…RKAM). A coiled-coil region spans residues 603–630 (EERKLIRAALRELRQRKRDQRDKERERR). Residues 617–640 (QRKRDQRDKERERRLQEARGRPGE) show a composition bias toward basic and acidic residues. Residues 676-689 (NDGTRTARTTTVES) are compositionally biased toward polar residues. A compositionally biased stretch (low complexity) spans 701 to 720 (STMMQTKTFSSSSSSKKMGS). Ser729 carries the post-translational modification Phosphoserine. Positions 738–750 (LEKRQAEKKKELM) are enriched in basic and acidic residues. Ser792 carries the phosphoserine modification. Residues 799–906 (NSIKQMLLDW…YVQSLYNHLR (108 aa)) enclose the Calponin-homology (CH) domain.

This sequence belongs to the smoothelin family. Smooth muscle; contractile or vascular (for the long form).

The protein localises to the cytoplasm. It is found in the cytoskeleton. Its function is as follows. Structural protein of the cytoskeleton. The chain is Smoothelin (SMTN) from Homo sapiens (Human).